The sequence spans 86 residues: uncharacterized protein (86 aa).

A disordered region spans residues 1 to 21 (MLSNSTSRNRHSKHNKKNTRE). Residues 8–17 (RNRHSKHNKK) are compositionally biased toward basic residues.

This is an uncharacterized protein from Acidianus convivator (ATV).